The chain runs to 456 residues: tRNA-2-methylthio-N(6)-dimethylallyladenosine synthase (456 aa).

An MTTase N-terminal domain is found at 3–120 (KKVYVKTFGC…LPQMIDQRRA (118 aa)). [4Fe-4S] cluster contacts are provided by Cys-12, Cys-49, Cys-83, Cys-157, Cys-161, and Cys-164. The 235-residue stretch at 143–377 (RIDGPSAFVS…QATIEENVQR (235 aa)) folds into the Radical SAM core domain. Positions 380-447 (QAMVGKVERI…PHSLRGELVM (68 aa)) constitute a TRAM domain.

Belongs to the methylthiotransferase family. MiaB subfamily. In terms of assembly, monomer. [4Fe-4S] cluster serves as cofactor.

The protein localises to the cytoplasm. The catalysed reaction is N(6)-dimethylallyladenosine(37) in tRNA + (sulfur carrier)-SH + AH2 + 2 S-adenosyl-L-methionine = 2-methylsulfanyl-N(6)-dimethylallyladenosine(37) in tRNA + (sulfur carrier)-H + 5'-deoxyadenosine + L-methionine + A + S-adenosyl-L-homocysteine + 2 H(+). In terms of biological role, catalyzes the methylthiolation of N6-(dimethylallyl)adenosine (i(6)A), leading to the formation of 2-methylthio-N6-(dimethylallyl)adenosine (ms(2)i(6)A) at position 37 in tRNAs that read codons beginning with uridine. The protein is tRNA-2-methylthio-N(6)-dimethylallyladenosine synthase of Paraburkholderia phymatum (strain DSM 17167 / CIP 108236 / LMG 21445 / STM815) (Burkholderia phymatum).